We begin with the raw amino-acid sequence, 315 residues long: Ribonuclease Z (315 aa).

7 residues coordinate Zn(2+): histidine 61, histidine 63, aspartate 65, histidine 66, histidine 151, aspartate 219, and histidine 278. The active-site Proton acceptor is aspartate 65.

The protein belongs to the RNase Z family. In terms of assembly, homodimer. Zn(2+) serves as cofactor.

It catalyses the reaction Endonucleolytic cleavage of RNA, removing extra 3' nucleotides from tRNA precursor, generating 3' termini of tRNAs. A 3'-hydroxy group is left at the tRNA terminus and a 5'-phosphoryl group is left at the trailer molecule.. Its function is as follows. Zinc phosphodiesterase, which displays some tRNA 3'-processing endonuclease activity. Probably involved in tRNA maturation, by removing a 3'-trailer from precursor tRNA. The sequence is that of Ribonuclease Z from Clostridium botulinum (strain Alaska E43 / Type E3).